Consider the following 214-residue polypeptide: A-type ATP synthase subunit D (214 aa).

The protein belongs to the V-ATPase D subunit family. Has multiple subunits with at least A(3), B(3), C, D, E, F, H, I and proteolipid K(x).

It is found in the cell membrane. Its function is as follows. Component of the A-type ATP synthase that produces ATP from ADP in the presence of a proton gradient across the membrane. This Pyrococcus horikoshii (strain ATCC 700860 / DSM 12428 / JCM 9974 / NBRC 100139 / OT-3) protein is A-type ATP synthase subunit D.